The following is a 302-amino-acid chain: Formylmethanofuran--tetrahydromethanopterin formyltransferase (302 aa).

The protein belongs to the FTR family. Homotetramer.

The protein resides in the cytoplasm. It carries out the reaction N-formylmethanofuran + 5,6,7,8-tetrahydromethanopterin + H(+) = N(5)-formyl-5,6,7,8-tetrahydromethanopterin + methanofuran. The protein operates within one-carbon metabolism; formaldehyde degradation; formate from formaldehyde (H(4)MPT route): step 4/5. Its function is as follows. Catalyzes the transfer of a formyl group from 5-formyl tetrahydromethanopterin (5-formyl-H(4)MPT) to methanofuran (MFR) to produce formylmethanofuran (formyl-MFR) and tetrahydromethanopterin (H(4)MPT). In Methylobacillus flagellatus (strain ATCC 51484 / DSM 6875 / VKM B-1610 / KT), this protein is Formylmethanofuran--tetrahydromethanopterin formyltransferase.